The following is a 251-amino-acid chain: Ubiquinone biosynthesis O-methyltransferase (251 aa).

S-adenosyl-L-methionine is bound by residues Arg36, Gly61, Asp82, and Ile124.

It belongs to the methyltransferase superfamily. UbiG/COQ3 family.

It catalyses the reaction a 3-demethylubiquinol + S-adenosyl-L-methionine = a ubiquinol + S-adenosyl-L-homocysteine + H(+). It carries out the reaction a 3-(all-trans-polyprenyl)benzene-1,2-diol + S-adenosyl-L-methionine = a 2-methoxy-6-(all-trans-polyprenyl)phenol + S-adenosyl-L-homocysteine + H(+). It participates in cofactor biosynthesis; ubiquinone biosynthesis. Its function is as follows. O-methyltransferase that catalyzes the 2 O-methylation steps in the ubiquinone biosynthetic pathway. The protein is Ubiquinone biosynthesis O-methyltransferase of Rickettsia akari (strain Hartford).